A 671-amino-acid polypeptide reads, in one-letter code: Probable serine/threonine-protein kinase DDB_G0286627 (671 aa).

One can recognise a Protein kinase domain in the interval 31–283 (WVIERQLSKG…SHQLIKHPFF (253 aa)). ATP-binding positions include 37-45 (LSKGSFGQV) and K61. D148 serves as the catalytic Proton acceptor. The chain crosses the membrane as a helical span at residues 369–389 (FKIIYLFLILLFLMTILVNLN). The tract at residues 410 to 523 (PESNPIKKPS…PPVTETPKPT (114 aa)) is disordered. A compositionally biased stretch (low complexity) spans 427–490 (NQYSEGSQSS…PTDSSTTDPP (64 aa)). A compositionally biased stretch (pro residues) spans 491-513 (VTDPPITDPPITDPPVTDPPITE).

The protein belongs to the protein kinase superfamily. STE Ser/Thr protein kinase family. Mg(2+) serves as cofactor.

It is found in the membrane. It carries out the reaction L-seryl-[protein] + ATP = O-phospho-L-seryl-[protein] + ADP + H(+). It catalyses the reaction L-threonyl-[protein] + ATP = O-phospho-L-threonyl-[protein] + ADP + H(+). The protein is Probable serine/threonine-protein kinase DDB_G0286627 of Dictyostelium discoideum (Social amoeba).